The following is a 97-amino-acid chain: NELL2-interacting cell ontogeny regulator 1 (97 aa).

The first 35 residues, 1 to 35 (MAPLPPCGPPRSPPPRLLLLLLLLSATLLGAPARA), serve as a signal peptide directing secretion.

This sequence belongs to the NICOL family. In terms of assembly, interacts with NELL2; triggers epididymal differentiation. Interacts with cell surface receptor TFRC; the interaction mediates uptake of NICOL1 into fibroblasts.

The protein resides in the secreted. The protein localises to the cytoplasm. It localises to the perinuclear region. Its function is as follows. mRNA-binding protein which interacts with a range of target mRNAs including SERPINE1, ACTA2, CCN2 and COL4A1 and may promote extracellular matrix production. Binds to the 3'-UTR of SERPINE1 mRNA and stabilizes the mRNA, possibly by competing for binding with SERBP1 and preventing SERBP1-mediated mRNA degradation. Also binds to the 3'-UTR of ACTA2. Testis-derived lumicrine factor that triggers epididymal differentiation and sperm maturation. This chain is NELL2-interacting cell ontogeny regulator 1, found in Bos taurus (Bovine).